Reading from the N-terminus, the 115-residue chain is Transcriptional regulator protein FixT (115 aa).

In terms of assembly, interacts directly with FixL.

Functionally, prevents transcription of the intermediate key regulatory genes nifA and fixK by counteracting the activity of the FixLJ two-component system. Acts as an inhibitor of the sensor hemoprotein kinase fixL, preventing the production or the accumulation of its phosphorylated form. This Rhizobium meliloti (strain 1021) (Ensifer meliloti) protein is Transcriptional regulator protein FixT (fixT).